A 380-amino-acid chain; its full sequence is MHVIGLISGTSVDGIDAALVDLSGTSLDLQVELLAAHTYPYSEPVRSQIISLCKGEAIPLAELALLDEAIAQEFAQAALEIQQGQPAAELIGSHGQTVYHRPVIGNTPAYTLQLGRGAIIAQQTGLPTITNFRVADTNAGGEGAPLVSRIDICLFSHPQQRRCVQNIGGIANLTYLPPLSDVAQIGVGVQGWDTGPGNSLLDLAVQYLSGGRQAYDDKGNWAAQGTPCQALVEQWLSHPYFEQAPPKSTGRELFGWDYLQTCLRDAEPYHLSAEDFLATLTELTAASIVLNYRQFLPALPDQVLLCGGGVRNHYLKQRLATLLTPIPVLSTNEVGLSADAKEAIAFAVLGYWRYLGLPGNVPAVTGARREVLLGELHTYP.

9–16 (GTSVDGID) provides a ligand contact to ATP.

The protein belongs to the anhydro-N-acetylmuramic acid kinase family.

The enzyme catalyses 1,6-anhydro-N-acetyl-beta-muramate + ATP + H2O = N-acetyl-D-muramate 6-phosphate + ADP + H(+). Its pathway is amino-sugar metabolism; 1,6-anhydro-N-acetylmuramate degradation. It participates in cell wall biogenesis; peptidoglycan recycling. Catalyzes the specific phosphorylation of 1,6-anhydro-N-acetylmuramic acid (anhMurNAc) with the simultaneous cleavage of the 1,6-anhydro ring, generating MurNAc-6-P. Is required for the utilization of anhMurNAc either imported from the medium or derived from its own cell wall murein, and thus plays a role in cell wall recycling. The protein is Anhydro-N-acetylmuramic acid kinase of Cyanothece sp. (strain PCC 7425 / ATCC 29141).